Consider the following 272-residue polypeptide: 3-methyl-2-oxobutanoate hydroxymethyltransferase (272 aa).

Residues D42 and D86 each coordinate Mg(2+). Residues 42 to 43 (DS), D86, and K116 each bind 3-methyl-2-oxobutanoate. Residue E118 coordinates Mg(2+). E185 acts as the Proton acceptor in catalysis.

This sequence belongs to the PanB family. Homodecamer; pentamer of dimers. Mg(2+) serves as cofactor.

The protein resides in the cytoplasm. It catalyses the reaction 3-methyl-2-oxobutanoate + (6R)-5,10-methylene-5,6,7,8-tetrahydrofolate + H2O = 2-dehydropantoate + (6S)-5,6,7,8-tetrahydrofolate. It functions in the pathway cofactor biosynthesis; (R)-pantothenate biosynthesis; (R)-pantoate from 3-methyl-2-oxobutanoate: step 1/2. Catalyzes the reversible reaction in which hydroxymethyl group from 5,10-methylenetetrahydrofolate is transferred onto alpha-ketoisovalerate to form ketopantoate. The protein is 3-methyl-2-oxobutanoate hydroxymethyltransferase of Prochlorococcus marinus (strain MIT 9313).